Consider the following 855-residue polypeptide: MPDKAEVFFDEGVLDFADVDEIVLDVGEEALAEALAHRHRRMIVFQGDEGKAEAAGVVTAGAADVLFDVRDRPISVLYVTDSLKEDTYARERYEEFRRVLEGFAEEANFEYELEALTFSGSKRALGTTWDLMVIDLSYDLDPDAIGRLVETVRGGGLVIFQTPPFDRWRNMWTAFHKSLVTPPYTLDHVGKRFNRRFIRKLKEHDGVWIVDTDEWTAEPEPSEDVDLEVEVKRRERPDLDPPDDAVLPEELYRMCATEDQFRALIRFEELLESNGKTALILTADRGRGKSALLGIAVAGAGVTTDVYDVVVTASEPENVAVLFEFLLEALRELGVEYDVERDDKGNIVYVETDDFVVEYERPSEASEIECDLMVVDEAASIHVPILERILDNNDKVVYSSTIHGYEGAGRGFSVRFLQNVRKRRDVRLIEFKMHEPIRYDSDDPIERWLFDTLLLDAEPADLDKEDLECVKEMRVEFEKPDLRYWFEDPEGEEELRQFIGIYVMAHYRNRPSDVMVLADAPHHEAYALKTETGKIVTALQVAREGTIPRDVITKMRRGYRPPGNVIPDLMVQHHDALDFPRMKGLRIVRIATHPDIMRHGLGSRALKELAKIAKKKDYDWIGTGFGANEELTRFWLRNGFVPVHISPNRNPVSGEYSVAVIRPISEEAEEIINRANFEFRIKLADWLGETHRDLEPEVARLLFEPMSSLRYRPTLTEGQLRRLKKYADMVHTYEIAADAVRELAKAYFLDTEDRPELSEEEELLLITKCLQRWKWADVADVLGEEVPDLMRSLRDLVGLLYEEYKEDLQRSAAVEGIRKAVERLADKGLTGTVIVEVEEGEPKEVIIRREERLEL.

Residues Gln-260, 286 to 295 (GRGKSALLGI), and Arg-438 contribute to the ATP site. Positions 480-663 (PDLRYWFEDP…GEYSVAVIRP (184 aa)) constitute an N-acetyltransferase domain. Acetyl-CoA contacts are provided by residues 590–592 (IAT), 597–603 (MRHGLGS), Glu-630, and Arg-637.

It belongs to the RNA cytidine acetyltransferase family. TmcA subfamily.

The protein resides in the cytoplasm. The enzyme catalyses cytidine(34) in elongator tRNA(Met) + acetyl-CoA + ATP + H2O = N(4)-acetylcytidine(34) in elongator tRNA(Met) + ADP + phosphate + CoA + H(+). In terms of biological role, catalyzes the formation of N(4)-acetylcytidine (ac(4)C) at the wobble position of tRNA(Met), by using acetyl-CoA as an acetyl donor and ATP (or GTP). This chain is tRNA(Met) cytidine acetyltransferase TmcA, found in Methanopyrus kandleri (strain AV19 / DSM 6324 / JCM 9639 / NBRC 100938).